Reading from the N-terminus, the 102-residue chain is Large ribosomal subunit protein uL24 (102 aa).

A disordered region spans residues 1-22 (MHVKKGDTVQVMSGKDKGKQGV).

The protein belongs to the universal ribosomal protein uL24 family. In terms of assembly, part of the 50S ribosomal subunit.

Its function is as follows. One of two assembly initiator proteins, it binds directly to the 5'-end of the 23S rRNA, where it nucleates assembly of the 50S subunit. Functionally, one of the proteins that surrounds the polypeptide exit tunnel on the outside of the subunit. The protein is Large ribosomal subunit protein uL24 of Exiguobacterium sp. (strain ATCC BAA-1283 / AT1b).